Here is a 1693-residue protein sequence, read N- to C-terminus: Non-structural polyprotein pORF1 (1693 aa).

Positions 56–240 (VFRPEVFWNH…HDVSNLRSWI (185 aa)) constitute an Alphavirus-like MT domain. The tract at residues 241–439 (RTTKVTGDHP…FYAQCRRWLS (199 aa)) is Y-domain. Cys-434 and Cys-481 are oxidised to a cystine. Positions 442-509 (FHLDPRVLVF…EAYEGSDVDP (68 aa)) are protease. The interval 510–691 (AESAISDISG…FSPGHVWESA (182 aa)) is zinc-binding. Zn(2+)-binding residues include His-671, Glu-673, and His-686. Positions 712 to 770 (SSPAQPDLGFISEPSIPSRAATLTPAAPLPPPAPDPSPTPSAPARGEPAPGATARAPAI) are hinge. Residues 732–768 (ATLTPAAPLPPPAPDPSPTPSAPARGEPAPGATARAP) form a disordered region. Residues 738-752 (APLPPPAPDPSPTPS) show a composition bias toward pro residues. In terms of domain architecture, Macro spans 775–921 (ARHRRLLFTY…LYLPELAARW (147 aa)). Positions 934 to 1082 (ITEDVARTAN…RPDLAPTSWW (149 aa)) constitute a (+)RNA virus helicase ATP-binding domain. Positions 960–1204 (GCRVTPGVVQ…ISDAIVNNFF (245 aa)) are NTPase/helicase. 975–982 (GVPGSGKS) is a binding site for ATP. The region spanning 1083–1216 (HVTHRCPADV…GGEIGHQRPS (134 aa)) is the (+)RNA virus helicase C-terminal domain. The tract at residues 1207 to 1693 (GGEIGHQRPS…LTNSILCRVE (487 aa)) is RNA-directed RNA polymerase. One can recognise a RdRp catalytic domain in the interval 1454–1565 (SMVFENDFSE…LCSEYRQSPG (112 aa)).

This sequence belongs to the hepevirus non-structural polyprotein family. As to quaternary structure, the protease domain interacts with host EIF2AK4 (via C-terminus); this interaction inhibits dimerization of EIF2AK4 and prevents EIF2AK4-mediated phosphorylation of host EIF2A. The cofactor is Mg(2+). In terms of processing, ORF1 polyprotein does not seem to be processed into distinct enzymatic domains by a viral protease belonging to ORF1, but could be processed by a host serine protease like thrombin.

The protein resides in the host cytoplasm. It localises to the host perinuclear region. The catalysed reaction is GTP + S-adenosyl-L-methionine = N(7)-methyl-GTP + S-adenosyl-L-homocysteine. It catalyses the reaction RNA(n) + a ribonucleoside 5'-triphosphate = RNA(n+1) + diphosphate. Its activity is regulated as follows. Putative protease: Inhibited by chymostatin. Functionally, methyltransferase: Displays a capping enzyme activity. This function is necessary since all viral RNAs are synthesized in the cytoplasm, and host capping enzymes are restricted to the nucleus. The enzymatic reaction involves a covalent link between 7-methyl-GMP and the methyltransferase, whereas eukaryotic capping enzymes form a covalent complex only with GMP. Methyltransferase catalyzes transfer of a methyl group from S-adenosylmethionine to GTP and GDP to yield m(7)GTP or m(7)GDP. GDP is a better substrate than GTP. This enzyme also displays guanylyltransferase activity to form a covalent complex, methyltransferase-m(7)GMP, from which 7-methyl-GMP is transferred to the mRNA to create the cap structure. Y-domain: Indispensable for virus replication. In terms of biological role, putative protease: The putative protease domain, although necessary for replication of the virus, may not be a protease but rather a structural Zn(2+)-binding domain. Inhibits induction of IFN-beta by MDA5 and RIG-I pathways and down-regulates the expression of MDA5. Its function is as follows. NTPase/helicase: Multi-functional protein that exhibits NTPase and RNA unwinding activities. Hydrolyzes all NTPs efficiently and unwinds RNA duplexes containing 5' overhangs. Possesses a sequence independent RNA-5'-triphosphatase (RTPase) activity suggestive of its role in forming viral cap structure. Also participates in viral genome replication, RNA translocation and genome packaging/unpackaging. Functionally, RNA-directed RNA polymerase: Plays an essential role in the virus replication. Binds to the 3'-end of the genomic RNA to initiate viral replication. This chain is Non-structural polyprotein pORF1, found in Homo sapiens (Human).